A 135-amino-acid chain; its full sequence is Peptidyl-prolyl cis-trans isomerase FPR2 (135 aa).

Residues 1–17 (MMFNIYLFVTFFSTILA) form the signal peptide. Residues 43–132 (GDKVKVHYTG…VFDVELVDVK (90 aa)) enclose the PPIase FKBP-type domain.

The protein belongs to the FKBP-type PPIase family. FKBP2 subfamily.

Its subcellular location is the endoplasmic reticulum membrane. It carries out the reaction [protein]-peptidylproline (omega=180) = [protein]-peptidylproline (omega=0). With respect to regulation, inhibited by both FK506 and rapamycin. Binds FK506 with 15-fold lower affinity than FKB1. Functionally, PPIases accelerate the folding of proteins. It catalyzes the cis-trans isomerization of proline imidic peptide bonds in oligopeptides. FKBP-13 may play a role in protein trafficking in the ER. The sequence is that of Peptidyl-prolyl cis-trans isomerase FPR2 (FPR2) from Saccharomyces cerevisiae (strain ATCC 204508 / S288c) (Baker's yeast).